A 396-amino-acid chain; its full sequence is Phosphoglycerate kinase (396 aa).

Residues 21 to 23 (DFN), Arg-36, 59 to 62 (HLGR), Arg-118, and Arg-151 each bind substrate. ATP is bound by residues Lys-201, Gly-292, Glu-323, and 349 to 352 (GGDS).

Belongs to the phosphoglycerate kinase family. In terms of assembly, monomer.

It localises to the cytoplasm. The enzyme catalyses (2R)-3-phosphoglycerate + ATP = (2R)-3-phospho-glyceroyl phosphate + ADP. It functions in the pathway carbohydrate degradation; glycolysis; pyruvate from D-glyceraldehyde 3-phosphate: step 2/5. The sequence is that of Phosphoglycerate kinase from Leptospira borgpetersenii serovar Hardjo-bovis (strain L550).